The sequence spans 380 residues: Mitogen-activated protein kinase 3 (380 aa).

Residue A2 is modified to N-acetylalanine. The Protein kinase domain maps to Y43–L331. ATP-binding positions include I49–V57 and K72. D167 (proton acceptor) is an active-site residue. T199 carries the post-translational modification Phosphothreonine. The residue at position 203 (T203) is a Phosphothreonine; by MAP2K1 and MAP2K2. The TXY motif lies at T203–Y205. The residue at position 205 (Y205) is a Phosphotyrosine; by MAP2K1 and MAP2K2. At T208 the chain carries Phosphothreonine; by autocatalysis.

The protein belongs to the protein kinase superfamily. CMGC Ser/Thr protein kinase family. MAP kinase subfamily. As to quaternary structure, binds both upstream activators and downstream substrates in multimolecular complexes. Found in a complex with at least BRAF, HRAS, MAP2K1/MEK1, MAPK3 and RGS14. Interacts with ADAM15, ARRB2, CANX, DAPK1 (via death domain), HSF4, IER3, MAP2K1/MEK1, MORG1, NISCH, PEA15, SGK1 and MKNK2. MKNK2 isoform 1 binding prevents from dephosphorylation and inactivation. Interacts with TPR. Interacts with HSF1 (via D domain and preferentially with hyperphosphorylated form); this interaction occurs upon heat shock. Interacts with CDKN2AIP. Interacts with CAVIN4. Interacts with GIT1; this interaction is necessary for MAPK3 localization to focal adhesions. Interacts with ZNF263. Interacts with EBF4. It depends on Mg(2+) as a cofactor. Phosphorylated upon FLT3 and KIT signaling. Ligand-activated ALK induces tyrosine phosphorylation. Dephosphorylated by PTPRJ at Tyr-205. Dually phosphorylated on Thr-203 and Tyr-205, which activates the enzyme. Post-translationally, ubiquitinated by TRIM15 via 'Lys-63'-linked ubiquitination; leading to activation. Deubiquitinated by CYLD. As to expression, highest levels within the nervous system, expressed in different tissues, mostly in intestine, placenta and lung.

Its subcellular location is the cytoplasm. It is found in the nucleus. It localises to the membrane. The protein resides in the caveola. The protein localises to the cell junction. Its subcellular location is the focal adhesion. The enzyme catalyses L-seryl-[protein] + ATP = O-phospho-L-seryl-[protein] + ADP + H(+). It catalyses the reaction L-threonyl-[protein] + ATP = O-phospho-L-threonyl-[protein] + ADP + H(+). With respect to regulation, phosphorylated by MAP2K1/MEK1 and MAP2K2/MEK2 on Thr-203 and Tyr-205 in response to external stimuli like insulin or NGF. Both phosphorylations are required for activity. This phosphorylation causes dramatic conformational changes, which enable full activation and interaction of MAPK1/ERK2 with its substrates. Dephosphorylated and inactivated by DUSP3, DUSP6 and DUSP9. Its function is as follows. Serine/threonine kinase which acts as an essential component of the MAP kinase signal transduction pathway. MAPK1/ERK2 and MAPK3/ERK1 are the 2 MAPKs which play an important role in the MAPK/ERK cascade. They participate also in a signaling cascade initiated by activated KIT and KITLG/SCF. Depending on the cellular context, the MAPK/ERK cascade mediates diverse biological functions such as cell growth, adhesion, survival and differentiation through the regulation of transcription, translation, cytoskeletal rearrangements. The MAPK/ERK cascade also plays a role in initiation and regulation of meiosis, mitosis, and postmitotic functions in differentiated cells by phosphorylating a number of transcription factors. About 160 substrates have already been discovered for ERKs. Many of these substrates are localized in the nucleus, and seem to participate in the regulation of transcription upon stimulation. However, other substrates are found in the cytosol as well as in other cellular organelles, and those are responsible for processes such as translation, mitosis and apoptosis. Moreover, the MAPK/ERK cascade is also involved in the regulation of the endosomal dynamics, including lysosome processing and endosome cycling through the perinuclear recycling compartment (PNRC); as well as in the fragmentation of the Golgi apparatus during mitosis. The substrates include transcription factors (such as ATF2, BCL6, ELK1, ERF, FOS, HSF4 or SPZ1), cytoskeletal elements (such as CANX, CTTN, GJA1, MAP2, MAPT, PXN, SORBS3 or STMN1), regulators of apoptosis (such as BAD, BTG2, CASP9, DAPK1, IER3, MCL1 or PPARG), regulators of translation (such as EIF4EBP1) and a variety of other signaling-related molecules (like ARHGEF2, DEPTOR, FRS2 or GRB10). Protein kinases (such as RAF1, RPS6KA1/RSK1, RPS6KA3/RSK2, RPS6KA2/RSK3, RPS6KA6/RSK4, SYK, MKNK1/MNK1, MKNK2/MNK2, RPS6KA5/MSK1, RPS6KA4/MSK2, MAPKAPK3 or MAPKAPK5) and phosphatases (such as DUSP1, DUSP4, DUSP6 or DUSP16) are other substrates which enable the propagation the MAPK/ERK signal to additional cytosolic and nuclear targets, thereby extending the specificity of the cascade. The polypeptide is Mitogen-activated protein kinase 3 (Mapk3) (Rattus norvegicus (Rat)).